We begin with the raw amino-acid sequence, 2081 residues long: RNA1 polyprotein (2081 aa).

Helical transmembrane passes span 481–501 (ILLLLGVFLCLGLVNSLIYSV) and 515–535 (ISLGALALVGLGDLVAYLFNS). Positions 714–881 (LKEDHTQLQL…PGVEPGPRGV (168 aa)) constitute an SF3 helicase domain. An ATP-binding site is contributed by 741 to 748 (GDSGVGKS). The disordered stretch occupies residues 877 to 900 (GPRGVDNLEFSEMDNRDSNGEPAY). The 223-residue stretch at 1166 to 1388 (GAEIPEALEA…ALYADIPHEF (223 aa)) folds into the Peptidase C3 domain. Catalysis depends on for picornain 3C-like protease activity residues histidine 1210, glutamate 1255, and cysteine 1348. Residues 1679 to 1810 (ANHFTGDYSG…SVATPVASVY (132 aa)) enclose the RdRp catalytic domain.

It localises to the host membrane. It carries out the reaction RNA(n) + a ribonucleoside 5'-triphosphate = RNA(n+1) + diphosphate. Picornain 3C-like protease is a thiol protease that probably cleaves the polyprotein. The polypeptide is RNA1 polyprotein (Citrus unshiu (Satsuma mandarin)).